A 452-amino-acid chain; its full sequence is Tubulin beta-2 chain (452 aa).

8 residues coordinate GTP: Q11, E72, S141, G145, T146, G147, N207, and N229. E72 is a binding site for Mg(2+). The disordered stretch occupies residues 414 to 452; sequence AESNMNDPVAEYQQYQDATADDEEEYDDEAADDHHQYES. Positions 432–444 are enriched in acidic residues; sequence TADDEEEYDDEAA.

Belongs to the tubulin family. As to quaternary structure, dimer of alpha and beta chains. A typical microtubule is a hollow water-filled tube with an outer diameter of 25 nm and an inner diameter of 15 nM. Alpha-beta heterodimers associate head-to-tail to form protofilaments running lengthwise along the microtubule wall with the beta-tubulin subunit facing the microtubule plus end conferring a structural polarity. Microtubules usually have 13 protofilaments but different protofilament numbers can be found in some organisms and specialized cells. It depends on Mg(2+) as a cofactor.

It localises to the cytoplasm. The protein localises to the cytoskeleton. Its function is as follows. Tubulin is the major constituent of microtubules, a cylinder consisting of laterally associated linear protofilaments composed of alpha- and beta-tubulin heterodimers. Microtubules grow by the addition of GTP-tubulin dimers to the microtubule end, where a stabilizing cap forms. Below the cap, tubulin dimers are in GDP-bound state, owing to GTPase activity of alpha-tubulin. This chain is Tubulin beta-2 chain (TUBB2), found in Solanum tuberosum (Potato).